A 542-amino-acid chain; its full sequence is CTP synthase (542 aa).

An amidoligase domain region spans residues 1–265 (MARYVFITGG…DSEVLAAFGI (265 aa)). CTP is bound at residue serine 13. Serine 13 lines the UTP pocket. Residues 14–19 (SLGKGI) and aspartate 71 each bind ATP. Aspartate 71 and glutamate 139 together coordinate Mg(2+). CTP is bound by residues 146–148 (DIE), 186–191 (KTKPTQ), and lysine 222. UTP-binding positions include 186-191 (KTKPTQ) and lysine 222. The Glutamine amidotransferase type-1 domain occupies 291 to 541 (TIAIVGKYTG…VEAAVEQSRL (251 aa)). Glycine 353 is an L-glutamine binding site. Catalysis depends on cysteine 380, which acts as the Nucleophile; for glutamine hydrolysis. L-glutamine is bound by residues 381–384 (FGMQ), glutamate 404, and arginine 469. Residues histidine 514 and glutamate 516 contribute to the active site.

It belongs to the CTP synthase family. Homotetramer.

The enzyme catalyses UTP + L-glutamine + ATP + H2O = CTP + L-glutamate + ADP + phosphate + 2 H(+). It carries out the reaction L-glutamine + H2O = L-glutamate + NH4(+). It catalyses the reaction UTP + NH4(+) + ATP = CTP + ADP + phosphate + 2 H(+). Its pathway is pyrimidine metabolism; CTP biosynthesis via de novo pathway; CTP from UDP: step 2/2. Its activity is regulated as follows. Allosterically activated by GTP, when glutamine is the substrate; GTP has no effect on the reaction when ammonia is the substrate. The allosteric effector GTP functions by stabilizing the protein conformation that binds the tetrahedral intermediate(s) formed during glutamine hydrolysis. Inhibited by the product CTP, via allosteric rather than competitive inhibition. In terms of biological role, catalyzes the ATP-dependent amination of UTP to CTP with either L-glutamine or ammonia as the source of nitrogen. Regulates intracellular CTP levels through interactions with the four ribonucleotide triphosphates. The polypeptide is CTP synthase (Agrobacterium fabrum (strain C58 / ATCC 33970) (Agrobacterium tumefaciens (strain C58))).